A 465-amino-acid chain; its full sequence is Mothers against decapentaplegic homolog 5 (465 aa).

Threonine 2 carries the N-acetylthreonine modification. In terms of domain architecture, MH1 spans 13–137 (PAVKRLLGWK…YKRVESPVLP (125 aa)). Zn(2+)-binding residues include cysteine 65, cysteine 110, cysteine 122, and histidine 127. A disordered region spans residues 163 to 251 (NEPHMPQNAT…DTSSNMIPQT (89 aa)). Over residues 169 to 182 (QNATFPDSFHQPNN) the composition is skewed to polar residues. The segment covering 186-197 (PLSPNSPYPPSP) has biased composition (pro residues). Positions 198–214 (ASSTYPNSPASSGPGSP) are enriched in low complexity. A compositionally biased stretch (polar residues) spans 237 to 251 (NSQPMDTSSNMIPQT). The MH2 domain maps to 271–465 (WCSIVYYELN…SPLNPISSVS (195 aa)). Phosphoserine is present on residues serine 463 and serine 465.

It belongs to the dwarfin/SMAD family. Homodimer. Forms trimers with the co-SMAD SMAD4. Interacts with PEBP2-alpha subunit and SMURF1. Interacts with SUV39H1 and SUV39H2. Interacts (via MH2 domain) with LEMD3. Interacts with WWP1. Interacts with TMEM119. Interacts with ZNF8. Interacts with RANBP3L. Interacts with HK1. Interacts with HGS; this interaction attenuates BMP signaling. Post-translationally, phosphorylated on serine by BMP (bone morphogenetic proteins) type 1 receptor kinase. Ubiquitin-mediated proteolysis by SMAD-specific E3 ubiquitin ligase SMURF1. In terms of tissue distribution, predominantly expressed in mesenchyme and somites during embryogenesis, and present in many tissues of the adult.

The protein resides in the cytoplasm. Its subcellular location is the nucleus. It is found in the mitochondrion. Functionally, transcriptional regulator that plays a role in various cellular processes including embryonic development, cell differentiation, angiogenesis and tissue homeostasis. Upon BMP ligand binding to their receptors at the cell surface, is phosphorylated by activated type I BMP receptors (BMPRIs) and associates with SMAD4 to form a heteromeric complex which translocates into the nucleus acting as transcription factor. In turn, the hetero-trimeric complex recognizes cis-regulatory elements containing Smad Binding Elements (SBEs) to modulate the outcome of the signaling network. Non-phosphorylated SMAD5 has a cytoplasmic role in energy metabolism regulation by promoting mitochondrial respiration and glycolysis in response to cytoplasmic pH changes. Mechanistically, interacts with hexokinase 1/HK1 and thereby accelerates glycolysis. The sequence is that of Mothers against decapentaplegic homolog 5 (Smad5) from Mus musculus (Mouse).